Reading from the N-terminus, the 257-residue chain is 5'-nucleotidase SurE (257 aa).

The a divalent metal cation site is built by aspartate 8, aspartate 9, serine 40, and asparagine 97.

This sequence belongs to the SurE nucleotidase family. Requires a divalent metal cation as cofactor.

The protein resides in the cytoplasm. The catalysed reaction is a ribonucleoside 5'-phosphate + H2O = a ribonucleoside + phosphate. Functionally, nucleotidase that shows phosphatase activity on nucleoside 5'-monophosphates. The chain is 5'-nucleotidase SurE from Desulforudis audaxviator (strain MP104C).